The chain runs to 87 residues: Small ribosomal subunit protein uS15 (87 aa).

The disordered stretch occupies residues 1 to 22 (MSEINKAEIVASNARAPSDTGS).

The protein belongs to the universal ribosomal protein uS15 family. Part of the 30S ribosomal subunit. Forms a bridge to the 50S subunit in the 70S ribosome, contacting the 23S rRNA.

In terms of biological role, one of the primary rRNA binding proteins, it binds directly to 16S rRNA where it helps nucleate assembly of the platform of the 30S subunit by binding and bridging several RNA helices of the 16S rRNA. Forms an intersubunit bridge (bridge B4) with the 23S rRNA of the 50S subunit in the ribosome. This Leptothrix cholodnii (strain ATCC 51168 / LMG 8142 / SP-6) (Leptothrix discophora (strain SP-6)) protein is Small ribosomal subunit protein uS15.